The primary structure comprises 128 residues: MAYRKLGRTSSQRKAVLRDLTTDLIINEAIVTTEARAKEIRKTVEKMITLGKRGDLHARRQAAAFVRNEIASESYDEATDKYTSTTALQKLFSEIAPRYTERNGGYTRILKTEPRRGDAAPMAIIELV.

This sequence belongs to the bacterial ribosomal protein bL17 family. As to quaternary structure, part of the 50S ribosomal subunit. Contacts protein L32.

The chain is Large ribosomal subunit protein bL17 from Streptococcus thermophilus (strain ATCC BAA-250 / LMG 18311).